The following is a 188-amino-acid chain: GTPase KRas (188 aa).

Residues 10–18 (GAGGVGKSA), 29–35 (VDEYDPT), 59–60 (AG), and 116–119 (NKCD) contribute to the GTP site. The Effector region signature appears at 32–40 (YDPTIEDSY). The tract at residues 167–188 (KEKMSKEGKKKKKKSKTKCILM) is disordered. A Cysteine methyl ester modification is found at Cys-185. Residue Cys-185 is the site of S-farnesyl cysteine attachment. A propeptide spans 186–188 (ILM) (removed in mature form).

This sequence belongs to the small GTPase superfamily. Ras family.

It localises to the cell membrane. It is found in the cytoplasm. It catalyses the reaction GTP + H2O = GDP + phosphate + H(+). Its activity is regulated as follows. Alternates between an inactive form bound to GDP and an active form bound to GTP. Activated by a guanine nucleotide-exchange factor (GEF) and inactivated by a GTPase-activating protein (GAP). Functionally, ras proteins bind GDP/GTP and possess intrinsic GTPase activity. Plays an important role in the regulation of cell proliferation. The protein is GTPase KRas (kras1) of Oryzias latipes (Japanese rice fish).